The following is a 647-amino-acid chain: Beta-galactosidase (647 aa).

Residues 1–24 (MLRVPLCTPLPLLALLQLLGAAHG) form the signal peptide. Residues 25–29 (IYNVT) constitute a propeptide that is removed on maturation. Asparagine 27 is a glycosylation site (N-linked (GlcNAc...) asparagine). Tyrosine 84, glutamate 130, and asparagine 188 together coordinate substrate. Residue glutamate 189 is the Proton donor of the active site. An intrachain disulfide couples cysteine 196 to cysteine 231. Residue asparagine 248 is glycosylated (N-linked (GlcNAc...) asparagine). The active-site Nucleophile is glutamate 269. Tyrosine 334 lines the substrate pocket. N-linked (GlcNAc...) asparagine glycosylation is found at asparagine 500, asparagine 504, asparagine 510, asparagine 544, asparagine 557, and asparagine 617. Cysteine 628 and cysteine 636 are joined by a disulfide.

Belongs to the glycosyl hydrolase 35 family. In terms of assembly, homodimer. May form higher multimers.

It is found in the lysosome. It carries out the reaction Hydrolysis of terminal non-reducing beta-D-galactose residues in beta-D-galactosides.. Cleaves beta-linked terminal galactosyl residues from gangliosides, glycoproteins, and glycosaminoglycans. This chain is Beta-galactosidase (Glb1), found in Mus musculus (Mouse).